The following is a 956-amino-acid chain: Calsyntenin-3 (956 aa).

The N-terminal stretch at 1-19 (MTLLLLPLLLASLLASCSC) is a signal peptide. The Cytoplasmic segment spans residues 1–30 (MTLLLLPLLLASLLASCSCNKANKHKPWIE). The Extracellular segment spans residues 20–847 (NKANKHKPWI…SHRNSMIPSA (828 aa)). 2 Cadherin domains span residues 29–145 (IEAE…APVF) and 146–246 (VERL…KPSW). Positions 31–51 (AEYQGIVMENDNTVLLNPPLF) form an intramembrane region, helical. At 52 to 71 (ALDKDAPLRYAGEICGFRLH) the chain is on the cytoplasmic side. Positions 72 to 94 (GSGVPFEAVILDKATGEGLIRAK) form an intramembrane region, helical. The Cytoplasmic segment spans residues 95–151 (EPVDCEAQKEHTFTIQAYDCGEGPDGANTKKSHKATVHVRVNDVNEFAPVFVERLYR). The segment at residues 152–172 (AAVTEGKLYDRILRVEAIDGD) is an intramembrane region (helical). The Cytoplasmic segment spans residues 173–255 (CSPQYSQICY…WQGWNKRIEY (83 aa)). Residues 256-276 (APGAGSLALFPGIRLETCDEP) form a helical membrane-spanning segment. The Lumenal segment spans residues 277–364 (LWNIQATIEL…PLGGPSGLGS (88 aa)). 5 N-linked (GlcNAc...) asparagine glycosylation sites follow: N299, N327, N347, N507, and N740. The helical transmembrane segment at 848–868 (ATLIIVVCVGFLVLMVVLGLV) threads the bilayer. Topologically, residues 869 to 956 (RIHSLHRRVS…RIIETPPHRY (88 aa)) are cytoplasmic. Residues 916–956 (QSCVTGAVGGQQEDEDSSDSEVADSPSSDERRIIETPPHRY) form a disordered region. The segment covering 927-937 (QEDEDSSDSEV) has biased composition (acidic residues). Residues 943–956 (SDERRIIETPPHRY) show a composition bias toward basic and acidic residues.

Belongs to the calsyntenin family. Interacts (via cadherin domains) with both alpha and beta isoforms of neurexins (NRXN1, NRXN2 and NRXN3). Directly interacts with APBA2. Forms a tripartite complex with APBA2 and APP. Interacts with low affinity with KLC1. Interacts with SLC23A2/SVCT2. As to quaternary structure, interacts with CIDEA; inhibiting the lipid transferase activity of CIDEA. Interacts with CIDEC; inhibiting the lipid transferase activity of CIDEC. Proteolytically processed under normal cellular conditions. A primary zeta-cleavage generates a large extracellular (soluble) N-terminal domain (sAlc) and a short C-terminal transmembrane fragment (CTF1). A secondary cleavage catalyzed by gamma-secretase within the transmembrane domain releases the beta-Alc-beta chain in the extracellular milieu and produces an intracellular fragment (AlcICD). This processing is strongly suppressed in the tripartite complex formed with APBA2 and APP, which seems to prevent the association with gamma-secretase. In terms of processing, ubiquitinated: endoplasmic reticulum-localized protein is ubiquitinated and degraded by the endoplasmic reticulum-associated degradation (ERAD) pathway. As to expression, according to PubMed:12498782, expressed predominantly in the brain and in kidney. Low levels in heart, skeletal muscle, liver, placenta, pancreas and lung. According to PubMed:12972431, predominant expression in brain, and only marginal in kidney. In brain, present throughout all cortical layers, highest levels in GABAergic neurons (based on morphology and distribution pattern). Expression is restricted to adipose tissue, with high expression in multilocular thermogenic adipocytes (brown adipose tissue).

Its subcellular location is the postsynaptic cell membrane. The protein localises to the endoplasmic reticulum membrane. The protein resides in the golgi apparatus membrane. It localises to the cell projection. It is found in the dendrite. Its subcellular location is the lipid droplet. Its function is as follows. Postsynaptic adhesion molecule that binds to presynaptic neurexins to mediate both excitatory and inhibitory synapse formation. Promotes synapse development by acting as a cell adhesion molecule at the postsynaptic membrane, which associates with both neurexin-alpha and neurexin-beta proteins at the presynaptic membrane. Regulates the balance between excitatory and inhibitory synapses by inhibiting formation of excitatory parallel-fiber synapses and promoting formation of inhibitory synapses in the same neuron. May also be involved in ascorbate (vitamin C) uptake via its interaction with SLC23A2/SVCT2. Complex formation with APBA2 and APP, stabilizes APP metabolism and enhances APBA2-mediated suppression of beta-APP40 secretion, due to the retardation of intracellular APP maturation. In terms of biological role, adipose-specific isoform that plays a key role in adaptive thermogenesis. Facilitates the efficient use of stored triglyceride by promoting multilocular morphology of thermogenic adipocytes: acts by inhibiting the activity of CIDEA and CIDEC on lipid droplets, thereby preventing lipid droplet fusion and facilitating lipid utilization. May also participate in adaptive thermogenesis by promoting sympathetic innervation of thermogenic adipose tissue: acts by driving secretion of neurotrophic factor S100B from brown adipocytes, stimulating neurite outgrowth from sympathetic neurons. The chain is Calsyntenin-3 from Homo sapiens (Human).